Reading from the N-terminus, the 3020-residue chain is Protein furry homolog (3020 aa).

At Y213 the chain carries Phosphotyrosine. 3 disordered regions span residues 1378-1404 (GSSPSSPEDEVKDREGEVTASHGLKGN), 1529-1554 (ASGTTSSSNTVVAGQDSFPDPEESKI), and 1746-1773 (SSPVPDSGLNSSSTSSSISLGGSSGNLP). Phosphoserine is present on residues S1382 and S1383. Over residues 1752–1772 (SGLNSSSTSSSISLGGSSGNL) the composition is skewed to low complexity. 2 positions are modified to phosphoserine: S1936 and S1940. Over residues 1937 to 1956 (RSSSPDLSSSSKLTASRKST) the composition is skewed to low complexity. Disordered stretches follow at residues 1937-2042 (RSSS…PSHV) and 2355-2384 (LQNSSGRDGKPRAMAVTRSASSTSSGSNSN). The segment covering 1966 to 1976 (PGSGGGGGGSG) has biased composition (gly residues). Residues 2016-2042 (ACTQQGLSSKTRSNSSLKESLTDPSHV) show a composition bias toward polar residues. The span at 2369-2384 (AVTRSASSTSSGSNSN) shows a compositional bias: low complexity. Phosphoserine is present on residues S2427 and S2428. The tract at residues 2439–2458 (TSLVSSEDGPREQENMDDTN) is disordered. S2495 carries the post-translational modification Phosphoserine. Positions 2508–2535 (EERQLSRSTPSLNKMSHEDSDESSEEDL) are disordered. Phosphothreonine; by CDK1 is present on T2516. Residues 2526–2535 (DSDESSEEDL) are compositionally biased toward acidic residues. S2815 is subject to Phosphoserine.

Belongs to the furry protein family. As to quaternary structure, when phosphorylated by CDK1, interacts with PLK1; this interaction occurs in mitotic cells, but not in interphase cells, and leads to further FRY phosphorylation by PLK1. Phosphorylated by AURKA, CDK1 and PLK1.

The protein resides in the cytoplasm. It localises to the cytoskeleton. The protein localises to the microtubule organizing center. Its subcellular location is the centrosome. It is found in the spindle pole. In terms of biological role, plays a crucial role in the structural integrity of mitotic centrosomes and in the maintenance of spindle bipolarity by promoting PLK1 activity at the spindle poles in early mitosis. May function as a scaffold promoting the interaction between AURKA and PLK1, thereby enhancing AURKA-mediated PLK1 phosphorylation. This Mus musculus (Mouse) protein is Protein furry homolog (Fry).